Reading from the N-terminus, the 315-residue chain is Aspartate carbamoyltransferase catalytic subunit (315 aa).

R65 and T66 together coordinate carbamoyl phosphate. L-aspartate is bound at residue K93. Carbamoyl phosphate is bound by residues R115, H145, and Q148. L-aspartate is bound by residues R179 and R234. Carbamoyl phosphate-binding residues include G275 and P276.

This sequence belongs to the aspartate/ornithine carbamoyltransferase superfamily. ATCase family. As to quaternary structure, heterododecamer (2C3:3R2) of six catalytic PyrB chains organized as two trimers (C3), and six regulatory PyrI chains organized as three dimers (R2).

It carries out the reaction carbamoyl phosphate + L-aspartate = N-carbamoyl-L-aspartate + phosphate + H(+). Its pathway is pyrimidine metabolism; UMP biosynthesis via de novo pathway; (S)-dihydroorotate from bicarbonate: step 2/3. Catalyzes the condensation of carbamoyl phosphate and aspartate to form carbamoyl aspartate and inorganic phosphate, the committed step in the de novo pyrimidine nucleotide biosynthesis pathway. This Xanthomonas euvesicatoria pv. vesicatoria (strain 85-10) (Xanthomonas campestris pv. vesicatoria) protein is Aspartate carbamoyltransferase catalytic subunit.